The chain runs to 536 residues: Inactive beta-amylase 9 (536 aa).

Serine 47 carries the phosphoserine modification. Positions 511–536 (QASEAEVEAETASIGSGTGAPSLQTA) are disordered.

It belongs to the glycosyl hydrolase 14 family. In terms of tissue distribution, mostly expressed in young floral buds, flowers and roots, and, to a later extent, in stems and leaves.

The protein localises to the cytoplasm. This is Inactive beta-amylase 9 (BAM9) from Arabidopsis thaliana (Mouse-ear cress).